A 533-amino-acid polypeptide reads, in one-letter code: Calcineurin-interacting protein 3 (533 aa).

3 disordered regions span residues M1 to I30, P53 to R85, and M359 to P404. Basic and acidic residues predominate over residues K61–R85. Positions M359–S372 are enriched in polar residues. Basic and acidic residues predominate over residues P373–I384.

It localises to the nucleus. The protein is Calcineurin-interacting protein 3 of Caenorhabditis elegans.